A 156-amino-acid chain; its full sequence is Small ribosomal subunit protein uS17A (156 aa).

An N-acetylserine modification is found at Ser2. Glycyl lysine isopeptide (Lys-Gly) (interchain with G-Cter in ubiquitin) cross-links involve residues Lys15, Lys46, Lys56, Lys57, Lys79, Lys96, Lys105, Lys133, Lys141, and Lys148.

It belongs to the universal ribosomal protein uS17 family. As to quaternary structure, component of the small ribosomal subunit (SSU). Mature yeast ribosomes consist of a small (40S) and a large (60S) subunit. The 40S small subunit contains 1 molecule of ribosomal RNA (18S rRNA) and 33 different proteins (encoded by 57 genes). The large 60S subunit contains 3 rRNA molecules (25S, 5.8S and 5S rRNA) and 46 different proteins (encoded by 81 genes). Post-translationally, N-terminally acetylated by acetyltransferase NatA.

It is found in the cytoplasm. Its function is as follows. Component of the ribosome, a large ribonucleoprotein complex responsible for the synthesis of proteins in the cell. The small ribosomal subunit (SSU) binds messenger RNAs (mRNAs) and translates the encoded message by selecting cognate aminoacyl-transfer RNA (tRNA) molecules. The large subunit (LSU) contains the ribosomal catalytic site termed the peptidyl transferase center (PTC), which catalyzes the formation of peptide bonds, thereby polymerizing the amino acids delivered by tRNAs into a polypeptide chain. The nascent polypeptides leave the ribosome through a tunnel in the LSU and interact with protein factors that function in enzymatic processing, targeting, and the membrane insertion of nascent chains at the exit of the ribosomal tunnel. The protein is Small ribosomal subunit protein uS17A of Saccharomyces cerevisiae (strain ATCC 204508 / S288c) (Baker's yeast).